The following is a 468-amino-acid chain: 3-isopropylmalate dehydratase large subunit (468 aa).

Positions 349, 409, and 412 each coordinate [4Fe-4S] cluster.

Belongs to the aconitase/IPM isomerase family. LeuC type 1 subfamily. As to quaternary structure, heterodimer of LeuC and LeuD. The cofactor is [4Fe-4S] cluster.

The enzyme catalyses (2R,3S)-3-isopropylmalate = (2S)-2-isopropylmalate. It participates in amino-acid biosynthesis; L-leucine biosynthesis; L-leucine from 3-methyl-2-oxobutanoate: step 2/4. Its function is as follows. Catalyzes the isomerization between 2-isopropylmalate and 3-isopropylmalate, via the formation of 2-isopropylmaleate. This chain is 3-isopropylmalate dehydratase large subunit, found in Shewanella baltica (strain OS155 / ATCC BAA-1091).